The following is a 308-amino-acid chain: GATA transcription factor 10 (308 aa).

The segment at 214 to 268 adopts a GATA-type zinc-finger fold; the sequence is DGIVRICTHCETITTPQWRQGPSGPKTLCNACGVRFKSGRLVPEYRPASSPTFIP.

This sequence belongs to the type IV zinc-finger family. Class A subfamily.

The protein localises to the nucleus. Functionally, transcriptional activator that specifically binds 5'-GATA-3' or 5'-GAT-3' motifs within gene promoters. May be involved in the regulation of some light-responsive genes. The polypeptide is GATA transcription factor 10 (GATA10) (Arabidopsis thaliana (Mouse-ear cress)).